Reading from the N-terminus, the 318-residue chain is Thioredoxin reductase (318 aa).

An FAD-binding site is contributed by 36-43 (TGLQQGGQ). Cysteines 136 and 139 form a disulfide. 286-295 (DVMDHNYRQA) contacts FAD.

The protein belongs to the class-II pyridine nucleotide-disulfide oxidoreductase family. In terms of assembly, homodimer. It depends on FAD as a cofactor.

The protein resides in the cytoplasm. It catalyses the reaction [thioredoxin]-dithiol + NADP(+) = [thioredoxin]-disulfide + NADPH + H(+). The chain is Thioredoxin reductase (trxB) from Haemophilus influenzae (strain ATCC 51907 / DSM 11121 / KW20 / Rd).